Reading from the N-terminus, the 488-residue chain is Glutamyl-tRNA(Gln) amidotransferase subunit A (488 aa).

Residues K76 and S151 each act as charge relay system in the active site. S175 serves as the catalytic Acyl-ester intermediate.

This sequence belongs to the amidase family. GatA subfamily. As to quaternary structure, heterotrimer of A, B and C subunits.

The enzyme catalyses L-glutamyl-tRNA(Gln) + L-glutamine + ATP + H2O = L-glutaminyl-tRNA(Gln) + L-glutamate + ADP + phosphate + H(+). Its function is as follows. Allows the formation of correctly charged Gln-tRNA(Gln) through the transamidation of misacylated Glu-tRNA(Gln) in organisms which lack glutaminyl-tRNA synthetase. The reaction takes place in the presence of glutamine and ATP through an activated gamma-phospho-Glu-tRNA(Gln). This chain is Glutamyl-tRNA(Gln) amidotransferase subunit A, found in Symbiobacterium thermophilum (strain DSM 24528 / JCM 14929 / IAM 14863 / T).